A 489-amino-acid polypeptide reads, in one-letter code: Otolin-1-A (489 aa).

Residues 1 to 23 form the signal peptide; sequence MPNILHPFIIIMTLLVVATGNQA. The tract at residues 27–57 is disordered; that stretch reads KTTQWPRMKPTKKPPPRDEGPSKLGSISTTV. An N-linked (GlcNAc...) asparagine glycan is attached at Asn-109. The tract at residues 133–335 is disordered; the sequence is GPVGEKGLPG…PGMKGTRGLK (203 aa). Residues 142-151 show a composition bias toward gly residues; it reads GIPGGKGEMG. 3 Collagen-like domains span residues 145–204, 205–255, and 264–323; these read GGKG…KGDK, GDTG…KGDK, and GQKG…PGQR. Residues 192–206 are compositionally biased toward basic and acidic residues; sequence QGEKGESGPKGDKGD. N-linked (GlcNAc...) asparagine glycosylation is present at Asn-225. A compositionally biased stretch (gly residues) spans 226–235; that stretch reads GTKGGMGEPG. Over residues 248–257 the composition is skewed to basic and acidic residues; sequence IKGEKGDKGD. N-linked (GlcNAc...) asparagine glycosylation occurs at Asn-287. The span at 290–310 shows a compositional bias: low complexity; the sequence is DGLPGSKGPKGDPGPLSKQGE. Residues 351–488 enclose the C1q domain; sequence AVQKRSAFSV…GFLLYADATK (138 aa). N-linked (GlcNAc...) asparagine glycans are attached at residues Asn-391 and Asn-396.

It belongs to the OTOL1 family. Homooligomer; disulfide-linked; probably forms homotrimers. Interacts with otomp.

The protein localises to the secreted. It localises to the extracellular space. The protein resides in the extracellular matrix. In terms of biological role, collagen-like protein, which provides an organic scaffold for otoliths onto the sensory epithelium of the inner ear. Acts as a scaffold for biomineralization by sequestering calcium. This chain is Otolin-1-A (otol1a), found in Danio rerio (Zebrafish).